Here is a 557-residue protein sequence, read N- to C-terminus: Formate--tetrahydrofolate ligase (557 aa).

An ATP-binding site is contributed by 65-72; that stretch reads TPAGEGKT.

It belongs to the formate--tetrahydrofolate ligase family. As to quaternary structure, homotetramer.

The enzyme catalyses (6S)-5,6,7,8-tetrahydrofolate + formate + ATP = (6R)-10-formyltetrahydrofolate + ADP + phosphate. Its pathway is one-carbon metabolism; tetrahydrofolate interconversion. The protein is Formate--tetrahydrofolate ligase (fhs) of Methylorubrum extorquens (strain ATCC 14718 / DSM 1338 / JCM 2805 / NCIMB 9133 / AM1) (Methylobacterium extorquens).